The chain runs to 464 residues: Histidine--tRNA ligase (464 aa).

Belongs to the class-II aminoacyl-tRNA synthetase family. Homodimer.

Its subcellular location is the cytoplasm. The catalysed reaction is tRNA(His) + L-histidine + ATP = L-histidyl-tRNA(His) + AMP + diphosphate + H(+). This Stenotrophomonas maltophilia (strain K279a) protein is Histidine--tRNA ligase.